Consider the following 359-residue polypeptide: E3 ubiquitin-protein ligase RNF146 (359 aa).

Residues 36-74 (CAICLQTCVHPVSLPCKHVFCYLCVKGASWLGKRCALCR) form an RING-type zinc finger. Residues Lys84 and Lys94 each participate in a glycyl lysine isopeptide (Lys-Gly) (interchain with G-Cter in ubiquitin) cross-link. Residues 91-167 (EELKAASRGN…EHGRRRKIKR (77 aa)) enclose the WWE domain. A glycoprotein-binding residues include Tyr107, Arg110, and Trp114. A Glycyl lysine isopeptide (Lys-Gly) (interchain with G-Cter in ubiquitin) cross-link involves residue Lys130. A glycoprotein is bound by residues Tyr144, Gln153, Arg163, and Lys175. Lys175 is covalently cross-linked (Glycyl lysine isopeptide (Lys-Gly) (interchain with G-Cter in ubiquitin)). The tract at residues 259-359 (ERSHRGEGEE…PDGQCTVTEV (101 aa)) is disordered. Over residues 284 to 298 (SVEETESDASSDSED) the composition is skewed to acidic residues. A phosphoserine mark is found at Ser290 and Ser294. A compositionally biased stretch (polar residues) spans 306-322 (HSLTQQRLLVPNANQTV).

In terms of assembly, can form homooligomers. Interacts with PARsylated AXIN1, AXIN2, BLZF1, CASC3, H1-2, IPO7, LIG3, NCL, PARP1, XRCC1, XRCC5 and XRCC6. Interacts with DDB1, DHX15, IQGAP1, LRPPRC, PARP2, PRKDC, RUVBL2, TNKS1 and TNKS2. Binding often leads to interactor ubiquitination, in the presence of the appropriate E1 and E2 enzymes, and proteasomal degradation. In terms of processing, ubiquitinated; autoubiquitinated. Autoubiquitination is enhanced upon poly(ADP-ribose)-binding.

The protein resides in the cytoplasm. It localises to the cytosol. Its subcellular location is the nucleus. It catalyses the reaction S-ubiquitinyl-[E2 ubiquitin-conjugating enzyme]-L-cysteine + [acceptor protein]-L-lysine = [E2 ubiquitin-conjugating enzyme]-L-cysteine + N(6)-ubiquitinyl-[acceptor protein]-L-lysine.. The protein operates within protein modification; protein ubiquitination. E3 ubiquitin-protein ligase that specifically binds poly-ADP-ribosylated (PARsylated) proteins and mediates their ubiquitination and subsequent degradation. May regulate many important biological processes, such as cell survival and DNA damage response. Acts as an activator of the Wnt signaling pathway by mediating the ubiquitination of PARsylated AXIN1 and AXIN2, 2 key components of the beta-catenin destruction complex. Acts in cooperation with tankyrase proteins (TNKS and TNKS2), which mediate PARsylation of target proteins AXIN1, AXIN2, BLZF1, CASC3, TNKS and TNKS2. Recognizes and binds tankyrase-dependent PARsylated proteins via its WWE domain and mediates their ubiquitination, leading to their degradation. Different ubiquitin linkage types have been observed: TNKS2 undergoes ubiquitination at 'Lys-48' and 'Lys-63', while AXIN1 is only ubiquitinated at 'Lys-48'. May regulate TNKS and TNKS2 subcellular location, preventing aggregation at a centrosomal location. Neuroprotective protein. Protects the brain against N-methyl-D-aspartate (NMDA) receptor-mediated glutamate excitotoxicity and ischemia, by interfering with PAR-induced cell death, called parthanatos. Prevents nuclear translocation of AIFM1 in a PAR-binding dependent manner. Does not affect PARP1 activation. Protects against cell death induced by DNA damaging agents, such as N-methyl-N-nitro-N-nitrosoguanidine (MNNG) and rescues cells from G1 arrest. Promotes cell survival after gamma-irradiation. Facilitates DNA repair. The polypeptide is E3 ubiquitin-protein ligase RNF146 (RNF146) (Ailuropoda melanoleuca (Giant panda)).